Here is a 251-residue protein sequence, read N- to C-terminus: PF03932 family protein CutC (251 aa).

The protein belongs to the CutC family.

The protein localises to the cytoplasm. This is PF03932 family protein CutC from Agrobacterium fabrum (strain C58 / ATCC 33970) (Agrobacterium tumefaciens (strain C58)).